Consider the following 421-residue polypeptide: UDP-N-acetylglucosamine 1-carboxyvinyltransferase (421 aa).

Residue 22–23 (KN) participates in phosphoenolpyruvate binding. A UDP-N-acetyl-alpha-D-glucosamine-binding site is contributed by Arg-93. Cys-117 (proton donor) is an active-site residue. The residue at position 117 (Cys-117) is a 2-(S-cysteinyl)pyruvic acid O-phosphothioketal. Residues 122-126 (RPVDL), Asp-308, and Ile-330 contribute to the UDP-N-acetyl-alpha-D-glucosamine site.

This sequence belongs to the EPSP synthase family. MurA subfamily.

The protein localises to the cytoplasm. It carries out the reaction phosphoenolpyruvate + UDP-N-acetyl-alpha-D-glucosamine = UDP-N-acetyl-3-O-(1-carboxyvinyl)-alpha-D-glucosamine + phosphate. The protein operates within cell wall biogenesis; peptidoglycan biosynthesis. Cell wall formation. Adds enolpyruvyl to UDP-N-acetylglucosamine. The protein is UDP-N-acetylglucosamine 1-carboxyvinyltransferase of Pseudomonas fluorescens (strain ATCC BAA-477 / NRRL B-23932 / Pf-5).